The following is an 813-amino-acid chain: Origin of replication complex subunit 1B (813 aa).

The tract at residues 1–109 (MASTPRAKTF…TPKKKKKIDS (109 aa)) is disordered. Residues 11 to 21 (KSPTKTPSNIY) are compositionally biased toward polar residues. Residues 27–41 (SPSSTSHTPQTPETH) are compositionally biased toward low complexity. The segment covering 43–52 (PLRRSARHVS) has biased composition (basic residues). The short motif at 83–90 (PRKPTTDV) is the Nuclear localization signal element. A histone H3 binding region spans residues 163-187 (DPEIEDCQICFKSDTNIMIECDDCL). A PHD-type zinc finger spans residues 166–215 (IEDCQICFKSDTNIMIECDDCLGGFHLKCLKPPLKEVPEGDWICQFCEVK). Zn(2+)-binding residues include Cys169, Cys172, Cys183, Cys186, His191, and Cys194. Residues 203 to 207 (PEGDW) are histone H3 binding. Zn(2+) contacts are provided by Cys209 and Cys212. Residues 226-344 (PKPPEGKKLA…VHWRSFKRLA (119 aa)) form the BAH domain. The histone H3 binding stretch occupies residues 319–324 (ASNDGD). The segment at 349–372 (GDSDSDQEWNGRKEEEVDDSDEEM) is disordered. The segment at 436–803 (PKSLPCRSKE…DDVAFALKDN (368 aa)) is necessary and sufficient for ORC complex assembly. Position 471 to 479 (471 to 479 (GVPGTGKTI)) interacts with ATP. Asp561 and Glu562 together coordinate Mg(2+). 3 residues coordinate ATP: Glu562, Asn595, and Arg660.

This sequence belongs to the ORC1 family. In terms of assembly, component of the origin recognition complex (ORC) composed of at least ORC1 (ORC1A or ORC1B), ORC2, ORC3, ORC4, ORC5 and ORC6. ORC is regulated in a cell-cycle and development dependent manner. It is sequentially assembled at the exit from anaphase of mitosis and disassembled as cells enter S phase. Interacts directly with ORC2 and ORC5. Binds mostly unmodified histone H3, and, with lower efficiency, H3K4me1 H3K4me2 and H3K4me3. In terms of tissue distribution, follow a cell-cycle regulation with a peak at the G1/S-phase. Mostly expressed in flower buds, and, to a lower exent, in roots, leaves and stems.

Its subcellular location is the nucleus. Functionally, essential protein required for ovules fertilization. Component of the origin recognition complex (ORC) that binds origins of replication. It has a role in both chromosomal replication and mating type transcriptional silencing. Binds to the ARS consensus sequence (ACS) of origins of replication. H3K4me3 effector that positively regulates the transcription of a subset of genes. The chain is Origin of replication complex subunit 1B from Arabidopsis thaliana (Mouse-ear cress).